The following is a 415-amino-acid chain: L-cysteine:1D-myo-inositol 2-amino-2-deoxy-alpha-D-glucopyranoside ligase 2 (415 aa).

Zn(2+) is bound at residue cysteine 44. L-cysteinyl-5'-AMP contacts are provided by residues 44 to 47, threonine 59, and 82 to 84; these read CGIT and NIT. Positions 46-56 match the 'HIGH' region motif; sequence ITPYDSTHLGH. Residues 188-193 carry the 'ERGGDP' region motif; it reads ERGGDP. Tryptophan 228 serves as a coordination point for L-cysteinyl-5'-AMP. Cysteine 232 serves as a coordination point for Zn(2+). 250–252 contacts L-cysteinyl-5'-AMP; that stretch reads GSD. Histidine 257 lines the Zn(2+) pocket. Isoleucine 284 lines the L-cysteinyl-5'-AMP pocket. Positions 290-294 match the 'KMSKS' region motif; the sequence is KMSKS.

It belongs to the class-I aminoacyl-tRNA synthetase family. MshC subfamily. Monomer. Zn(2+) serves as cofactor.

It carries out the reaction 1D-myo-inositol 2-amino-2-deoxy-alpha-D-glucopyranoside + L-cysteine + ATP = 1D-myo-inositol 2-(L-cysteinylamino)-2-deoxy-alpha-D-glucopyranoside + AMP + diphosphate + H(+). Catalyzes the ATP-dependent condensation of GlcN-Ins and L-cysteine to form L-Cys-GlcN-Ins. This chain is L-cysteine:1D-myo-inositol 2-amino-2-deoxy-alpha-D-glucopyranoside ligase 2, found in Corynebacterium jeikeium (strain K411).